A 138-amino-acid polypeptide reads, in one-letter code: ATP synthase epsilon chain (138 aa).

This sequence belongs to the ATPase epsilon chain family. As to quaternary structure, F-type ATPases have 2 components, CF(1) - the catalytic core - and CF(0) - the membrane proton channel. CF(1) has five subunits: alpha(3), beta(3), gamma(1), delta(1), epsilon(1). CF(0) has three main subunits: a, b and c.

The protein resides in the cell inner membrane. Produces ATP from ADP in the presence of a proton gradient across the membrane. The sequence is that of ATP synthase epsilon chain from Bartonella quintana (strain Toulouse) (Rochalimaea quintana).